Reading from the N-terminus, the 339-residue chain is MYQLFRHGIFQMDAEKAHNFTIQCLKLAGNPLFKPILKSIIHAPKGFPKMVMGVNFPNPIGLAAGADKNGDAIDGFGALGFGFLELGTVTPVAQDGNAKPRQFRLIEAEGIINRNGFNNNGIDYLIENVKNARYKGVIGINIGKNKFTPLEQGKDDYIFCLNKAYNYAGYITVNISSPNTPDLRQLQYGDYFDDLLRSIKDRQTILANQYNKYVPIAVKIAPDLTESELVQIADTLVRHKMDGVIATNTTISRDTVMGMKNAEQQGGLSGKPLQHKSTEIIKRLHQELKGQIPIIGSGGIDGLQNAQEKIEAGAELLQVYSGLIYHGPKLVKELVKNIK.

Residues 64-68 (AGADK) and T88 contribute to the FMN site. A substrate-binding site is contributed by K68. 113 to 117 (NRNGF) contacts substrate. Residues N141 and N174 each contribute to the FMN site. N174 provides a ligand contact to substrate. Catalysis depends on S177, which acts as the Nucleophile. N179 serves as a coordination point for substrate. FMN-binding residues include K219 and T247. Residue 248–249 (NT) participates in substrate binding. Residues G270, G299, and 320 to 321 (YS) each bind FMN.

It belongs to the dihydroorotate dehydrogenase family. Type 2 subfamily. As to quaternary structure, monomer. Requires FMN as cofactor.

The protein localises to the cell membrane. It catalyses the reaction (S)-dihydroorotate + a quinone = orotate + a quinol. It functions in the pathway pyrimidine metabolism; UMP biosynthesis via de novo pathway; orotate from (S)-dihydroorotate (quinone route): step 1/1. Its function is as follows. Catalyzes the conversion of dihydroorotate to orotate with quinone as electron acceptor. This chain is Dihydroorotate dehydrogenase (quinone), found in Haemophilus influenzae (strain PittEE).